The chain runs to 1124 residues: Anillin (1124 aa).

Position 1 is an N-acetylmethionine (Met-1). Residues 1-25 show a composition bias toward basic and acidic residues; it reads MDPFTEKLLERTRARRENLQRKMAE. Residues 1–45 form a required for ubiquitination region; sequence MDPFTEKLLERTRARRENLQRKMAERPTAAPRSMTHAKRARQPLS. 2 disordered regions span residues 1–113 and 136–196; these read MDPF…ADTI and ATAA…ATPV. An interaction with CD2AP region spans residues 1–155; it reads MDPFTEKLLE…MQKLAEQRRR (155 aa). The interval 1–230 is nuclear localization; it reads MDPFTEKLLE…AKQNSVQEQP (230 aa). A phosphoserine mark is found at Ser-54 and Ser-72. Polar residues predominate over residues 77-96; sequence VEVSNLENKQPVESTSAKSC. 2 positions are modified to phosphoserine: Ser-97 and Ser-102. A compositionally biased stretch (low complexity) spans 97-108; that stretch reads SPSPVSPQVQPQ. A compositionally biased stretch (basic and acidic residues) spans 148-158; sequence KLAEQRRRWDN. Phosphoserine occurs at positions 172 and 182. Phosphothreonine is present on Thr-194. A phosphoserine mark is found at Ser-225 and Ser-252. The interaction with F-actin stretch occupies residues 231-676; sequence GTACLSKFSS…RDLLYSIDAY (446 aa). Lys-254 is covalently cross-linked (Glycyl lysine isopeptide (Lys-Gly) (interchain with G-Cter in SUMO1)). The residue at position 261 (Ser-261) is a Phosphoserine. A compositionally biased stretch (polar residues) spans 294 to 305; sequence TSPVKSTTSITD. The disordered stretch occupies residues 294–328; that stretch reads TSPVKSTTSITDAKSCEGQNPELLPKTPISPLKTG. Position 320 is a phosphothreonine (Thr-320). Phosphoserine is present on residues Ser-323 and Ser-339. Thr-364 bears the Phosphothreonine mark. The residue at position 371 (Lys-371) is an N6-acetyllysine. The span at 380–389 shows a compositional bias: basic and acidic residues; sequence RCQEHSKESP. The tract at residues 380-399 is disordered; the sequence is RCQEHSKESPARSTPHRTPI. Thr-397 and Thr-401 each carry phosphothreonine. Phosphoserine occurs at positions 417, 419, 449, 485, 518, 553, and 561. The stretch at 569–604 forms a coiled coil; it reads FSDVLEEGELDMEKSQEEMDQALAESSEEQEDALNI. Disordered stretches follow at residues 579-600 and 625-664; these read DMEKSQEEMDQALAESSEEQED and LVSTPRLELKDTSRSDESPKPGKFQRTRVPRAESGDSLGS. Basic and acidic residues-rich tracts occupy residues 631–644 and 654–664; these read LELKDTSRSDESPK and PRAESGDSLGS. A phosphoserine mark is found at Ser-637, Ser-642, Ser-658, Ser-661, and Ser-664. At Tyr-671 the chain carries Phosphotyrosine. A phosphoserine mark is found at Ser-678, Ser-688, Ser-792, and Ser-927. The tract at residues 730–1124 is localization to the cleavage furrow; the sequence is QQTVIYQASQ…DACYKPIGKP (395 aa). The 125-residue stretch at 983 to 1107 folds into the PH domain; sequence SVEERGFLTI…WMQKLNQVLV (125 aa).

As to quaternary structure, interacts with F-actin. Interacts with CD2AP. May interact with RHOA. Interacts with FZR1/CDH1 during mitotic exit. In terms of processing, phosphorylated during mitosis. Post-translationally, ubiquitinated, and this requires FZR1/CDH1. Ubiquitously expressed. Present at highest levels in the brain, at high levels in the placenta and testis, at intermediate levels in the intestine, ovary, skeletal muscle and thymus and at lower levels in heart, kidney, liver, lung, pancreas, prostate and spleen. In the kidney, it is widely expressed in tubules, but sparsely expressed in the glomerulus. Expression is significantly increased in renal biopsy specimens from idiopathic FSGS. Overexpressed in many tumor types including breast, colorectal, endometrial, hepatic, kidney, lung, ovarian and pancreatic tumors.

The protein resides in the nucleus. It localises to the cytoplasm. The protein localises to the cytoskeleton. Its subcellular location is the cell cortex. It is found in the cell projection. The protein resides in the bleb. Its function is as follows. Required for cytokinesis. Essential for the structural integrity of the cleavage furrow and for completion of cleavage furrow ingression. Plays a role in bleb assembly during metaphase and anaphase of mitosis. May play a significant role in podocyte cell migration. The protein is Anillin (ANLN) of Homo sapiens (Human).